We begin with the raw amino-acid sequence, 1198 residues long: Rac guanine nucleotide exchange factor B (1198 aa).

A disordered region spans residues 1–104; that stretch reads MFSNFFGSSK…QHQGVITSLQ (104 aa). Residues 8–20 are compositionally biased toward low complexity; that stretch reads SSKRNTIASSSSS. The segment covering 21 to 34 has biased composition (basic and acidic residues); the sequence is SKKDKDNGKDESSK. A compositionally biased stretch (polar residues) spans 35–58; that stretch reads LKNSGSSTLPKPITNNESGNNFIT. The segment covering 59–97 has biased composition (low complexity); sequence SPSVSSPLISPLSSSPSPLLSSSSNSIQSTSHQQQQQHQ. The region spanning 126–232 is the Calponin-homology (CH) 1 domain; the sequence is SSLEQTARKW…NIVVLGKHAS (107 aa). The disordered stretch occupies residues 260-284; that stretch reads FGGNHNNNNNNNNNNNTSNGDLSPV. Over residues 263–275 the composition is skewed to low complexity; sequence NHNNNNNNNNNNN. 2 consecutive Calponin-homology (CH) domains span residues 341 to 449 and 511 to 619; these read PELQ…NKMY and PEDM…ENFD. Residues 632-846 form the DH domain; sequence RRQKVIEEII…KRVADHVNES (215 aa). The region spanning 876–1026 is the PH domain; it reads TYIREGFLEI…WMEDLRSCLQ (151 aa). A compositionally biased stretch (acidic residues) spans 940–952; sequence GEACVDGDDDGGE. Disordered regions lie at residues 940–989 and 1076–1198; these read GEAC…SNKS and NNNN…IDNQ. Composition is skewed to low complexity over residues 977-989 and 1076-1118; these read NSNN…SNKS and NNNN…NNND. The span at 1155-1167 shows a compositional bias: acidic residues; it reads DETISDTESDDYE. A compositionally biased stretch (polar residues) spans 1188 to 1198; sequence FSDTIKNIDNQ.

In terms of assembly, binds to F-actin.

It is found in the late endosome. Involved in the regulation of the late steps of the endocytic pathway. The protein is Rac guanine nucleotide exchange factor B (gxcB) of Dictyostelium discoideum (Social amoeba).